We begin with the raw amino-acid sequence, 300 residues long: F-box/LRR-repeat protein 15 (300 aa).

Met1 carries the post-translational modification N-acetylmethionine. Positions 19–66 (FLDLPWEDVLLPHVLNRVPLRQLLRLQRVSRAFRSLVQLHLAGLRRFD) constitute an F-box domain. The segment at 113–269 (NPQLRSVALG…ESSLSRLRKR (157 aa)) is interaction with SMURF1. LRR repeat units follow at residues 141–162 (RLQR…RGLA), 167–188 (ALEE…VYLA), 194–215 (GLRS…QELA), 220–241 (ELHH…RTLA), and 246–267 (VLRS…SRLR).

The protein belongs to the FBXL15 family. In terms of assembly, part of the SCF (SKP1-CUL1-F-box) E3 ubiquitin-protein ligase complex SCF(FBXL15) composed of CUL1, SKP1, RBX1 and FBXL15.

It localises to the cytoplasm. Its pathway is protein modification; protein ubiquitination. In terms of biological role, substrate recognition component of a SCF (SKP1-CUL1-F-box protein) E3 ubiquitin-protein ligase complex which mediates the ubiquitination and subsequent proteasomal degradation of SMURF1, thereby acting as a positive regulator of the BMP signaling pathway. Required for dorsal/ventral pattern formation and bone mass maintenance. Also mediates ubiquitination of SMURF2 and WWP2. The protein is F-box/LRR-repeat protein 15 (FBXL15) of Homo sapiens (Human).